Here is a 158-residue protein sequence, read N- to C-terminus: E3 ubiquitin ligase complex SCF subunit sconC (158 aa).

Residues 100-158 form an interaction with the F-box domain of F-box proteins region; it reads ILAANYLDIKALLDVGCKTVANMIKGKSPEEIRKTFNIQNDFTPEEEDQIRRENEWAEE.

Belongs to the SKP1 family. Component of the SCF (SKP1-CUL1-F-box protein) E3 ubiquitin ligase complexes.

The protein operates within protein modification; protein ubiquitination. Functionally, essential component of the SCF (SKP1-CUL1-F-box protein) E3 ubiquitin ligase complexes, which mediate the ubiquitination and subsequent proteasomal degradation of target proteins. Controls sulfur metabolite repression, probably by mediating the inactivation or degradation of the metR transcription factor. The chain is E3 ubiquitin ligase complex SCF subunit sconC (sconC) from Aspergillus fumigatus (strain CBS 144.89 / FGSC A1163 / CEA10) (Neosartorya fumigata).